The sequence spans 428 residues: MARSLCPGAWLRKPYYLQARFSYVRMKYLFFSWLVVFVGSWIIYVQYSTYTELCRGKDCKKIICDKYKTGVIDGPACNSLCVTETLYFGKCLSTKPNNQMYLGIWDNLPGVVKCQMEQALHLDFGTELEPRKEIVLFDKPTRGTTVQKFKEMVYSLFKAKLGDQGNLSELVNLILTVADGDKDGQVSLGEAKSAWALLQLNEFLLMVILQDKEHTPKLMGFCGDLYVMESVEYTSLYGISLPWVIELFIPSGFRRSMDQLFTPSWPRKAKIAIGLLEFVEDVFHGPYGNFLMCDTSAKNLGYNDKYDLKMVDMRKIVPETNLKELIKDRHCESDLDCVYGTDCRTSCDQSTMKCTSEVIQPNLAKACQLLKDYLLRGAPSEIREELEKQLYSCIALKVTANQMEMEHSLILNNLKTLLWKKISYTNDS.

Topologically, residues 1 to 27 (MARSLCPGAWLRKPYYLQARFSYVRMK) are cytoplasmic. The helical transmembrane segment at 28-48 (YLFFSWLVVFVGSWIIYVQYS) threads the bilayer. Over 49–428 (TYTELCRGKD…WKKISYTNDS (380 aa)) the chain is Lumenal.

The protein belongs to the DIPK family. Post-translationally, among the many cysteines in the lumenal domain, most are probably involved in disulfide bonds.

It is found in the endoplasmic reticulum membrane. This chain is Divergent protein kinase domain 1A, found in Homo sapiens (Human).